Consider the following 352-residue polypeptide: Proton-activated chloride channel (352 aa).

Residues 1–55 (MEAIRKELSRSYQELNEEAEPVAIDPEEAEDEEKEQEEAASAVAPDRDSDRSSPP) are disordered. Topologically, residues 1–65 (MEAIRKELSR…VRFSRTCLKN (65 aa)) are cytoplasmic. The segment covering 15–38 (LNEEAEPVAIDPEEAEDEEKEQEE) has biased composition (acidic residues). A helical transmembrane segment spans residues 66–86 (FFSVLLILVYLLLMGVAVFLV). The Extracellular segment spans residues 87–299 (YQTITDFRDK…KDPYIQEIQD (213 aa)). The chain crosses the membrane as a helical span at residues 300–320 (IITANPWSMIALLCSVFLVLF). The Cytoplasmic portion of the chain corresponds to 321-352 (KAADFAKLSVKWMIKVRRRHLKKRARELNHIS).

The protein belongs to the proton-activated chloride channel family.

Its subcellular location is the cell membrane. It carries out the reaction chloride(in) = chloride(out). Chloride channel gated by pH that facilitates the entry of chloride ions into cells upon exposure to extracellular acidic pH. The chain is Proton-activated chloride channel from Xenopus tropicalis (Western clawed frog).